The sequence spans 527 residues: Aspartokinase (527 aa).

Position 333 is a phosphothreonine (Thr333). Residues 442–527 (LVGKHMKQYI…RLEQLKRLGI (86 aa)) form the ACT domain.

It belongs to the aspartokinase family. Homohexamer. Interacts with FPR1; the interaction is direct, plays a role in feedback inhibition of aspartokinase by threonine, and inhibited by tacrolimus and sirolimus.

It catalyses the reaction L-aspartate + ATP = 4-phospho-L-aspartate + ADP. Its pathway is amino-acid biosynthesis; L-methionine biosynthesis via de novo pathway; L-homoserine from L-aspartate: step 1/3. It participates in amino-acid biosynthesis; L-threonine biosynthesis; L-threonine from L-aspartate: step 1/5. Allosterically inhibited by threonine. In terms of biological role, phosphorylates aspartate, the first step in the biosynthesis of amino acids that derive from aspartate (the aspartate family of amino acids), including methioinine and threonine, the latter of which is a precursor to isoleucine. This Saccharomyces cerevisiae (strain ATCC 204508 / S288c) (Baker's yeast) protein is Aspartokinase (HOM3).